The following is a 399-amino-acid chain: Acetate kinase (399 aa).

Residue N7 participates in Mg(2+) binding. K14 contacts ATP. R90 contacts substrate. The active-site Proton donor/acceptor is D147. Residues 207–211 (HLGNG), 282–284 (DFR), and 330–334 (GIGEN) contribute to the ATP site. E385 lines the Mg(2+) pocket.

This sequence belongs to the acetokinase family. In terms of assembly, homodimer. Requires Mg(2+) as cofactor. It depends on Mn(2+) as a cofactor.

Its subcellular location is the cytoplasm. It carries out the reaction acetate + ATP = acetyl phosphate + ADP. The protein operates within metabolic intermediate biosynthesis; acetyl-CoA biosynthesis; acetyl-CoA from acetate: step 1/2. In terms of biological role, catalyzes the formation of acetyl phosphate from acetate and ATP. Can also catalyze the reverse reaction. The chain is Acetate kinase from Caldicellulosiruptor bescii (strain ATCC BAA-1888 / DSM 6725 / KCTC 15123 / Z-1320) (Anaerocellum thermophilum).